Reading from the N-terminus, the 396-residue chain is Phosphoglycerate kinase (396 aa).

Residues 19–21, Arg34, 57–60, Arg116, and Arg153 each bind substrate; these read DFN and HLGK. ATP-binding positions include Lys204, Glu324, and 351-354; that span reads GGDT.

The protein belongs to the phosphoglycerate kinase family. In terms of assembly, monomer.

It localises to the cytoplasm. The enzyme catalyses (2R)-3-phosphoglycerate + ATP = (2R)-3-phospho-glyceroyl phosphate + ADP. It participates in carbohydrate degradation; glycolysis; pyruvate from D-glyceraldehyde 3-phosphate: step 2/5. In Maridesulfovibrio salexigens (strain ATCC 14822 / DSM 2638 / NCIMB 8403 / VKM B-1763) (Desulfovibrio salexigens), this protein is Phosphoglycerate kinase.